A 149-amino-acid polypeptide reads, in one-letter code: Calmodulin (149 aa).

Ala2 carries the N-acetylalanine modification. 4 EF-hand domains span residues 8-43 (EQIAEFKEAFSLFDKDGDGTITTKELGTVMRSLGQN), 44-79 (PTEAELQDMINEVDADGNGTIDFPEFLTMMARKMKD), 81-116 (DSEEEIREAFRVFDKDGNGYISAAELRHVMTNLGEK), and 117-149 (LTDEEVDEMIREADIDGDGQVNYEEFVQIMTAK). Positions 21, 23, 25, 27, 32, 57, 59, 61, 63, 68, 94, 96, 98, 100, and 105 each coordinate Ca(2+). An N6,N6,N6-trimethyllysine modification is found at Lys116. Residues Asp130, Asp132, Asp134, Gln136, and Glu141 each contribute to the Ca(2+) site.

The protein belongs to the calmodulin family.

In terms of biological role, calmodulin acts as part of a calcium signal transduction pathway by mediating the control of a large number of enzymes, ion channels, aquaporins and other proteins through calcium-binding. Calcium-binding is required for the activation of calmodulin. Among the enzymes to be stimulated by the calmodulin-calcium complex are a number of protein kinases, such as myosin light-chain kinases and calmodulin-dependent protein kinase type II (CaMK2), and phosphatases. In Epinephelus akaara (Hong Kong grouper), this protein is Calmodulin (calm).